The chain runs to 67 residues: Neurotoxin Cex9 (67 aa).

The LCN-type CS-alpha/beta domain maps to 1–65; it reads KDGYPVEVTG…TWPLPNKSCG (65 aa). Intrachain disulfides connect cysteine 11–cysteine 64, cysteine 15–cysteine 40, cysteine 24–cysteine 45, and cysteine 28–cysteine 47. Cysteine 64 carries the cysteine amide modification. Positions 65–67 are excised as a propeptide; the sequence is GKK.

This sequence belongs to the long (4 C-C) scorpion toxin superfamily. Sodium channel inhibitor family. Beta subfamily. In terms of tissue distribution, expressed by the venom gland.

Its subcellular location is the secreted. Beta toxins bind voltage-independently at site-4 of sodium channels (Nav) and shift the voltage of activation toward more negative potentials thereby affecting sodium channel activation and promoting spontaneous and repetitive firing. This is Neurotoxin Cex9 from Centruroides exilicauda (Bark scorpion).